The sequence spans 499 residues: Nuclear receptor-binding protein 2 (499 aa).

Residues 1–31 form a disordered region; the sequence is MAAPEPAPRRGREREREDESEDESDILEESP. Basic and acidic residues predominate over residues 7–17; sequence APRRGRERERE. Acidic residues predominate over residues 18–28; the sequence is DESEDESDILE. Residues 36–304 enclose the Protein kinase domain; sequence QKRREQVNQG…AHNLLFHRVL (269 aa). Positions 396 to 416 are disordered; it reads APPPEEAQKAKTPTPEPFDSE. A phosphothreonine mark is found at threonine 407 and threonine 409.

This sequence belongs to the protein kinase superfamily. Ser/Thr protein kinase family. Expressed in Purkinje cells of the cerebellum and neurons in the CA3 region of the hippocampus. Also detected in non-neural tissues including mesenchymal layer adjacent to epithelium in developing bronchi of the lung, the epithelium of the stomach as well as cells in the liver.

The protein localises to the cytoplasm. May regulate apoptosis of neural progenitor cells during their differentiation. In Mus musculus (Mouse), this protein is Nuclear receptor-binding protein 2.